We begin with the raw amino-acid sequence, 234 residues long: Demethylmenaquinone methyltransferase (234 aa).

Residues Thr-58, Asp-79, and Asn-106–Ala-107 contribute to the S-adenosyl-L-methionine site.

It belongs to the class I-like SAM-binding methyltransferase superfamily. MenG/UbiE family.

The enzyme catalyses a 2-demethylmenaquinol + S-adenosyl-L-methionine = a menaquinol + S-adenosyl-L-homocysteine + H(+). It functions in the pathway quinol/quinone metabolism; menaquinone biosynthesis; menaquinol from 1,4-dihydroxy-2-naphthoate: step 2/2. In terms of biological role, methyltransferase required for the conversion of demethylmenaquinol (DMKH2) to menaquinol (MKH2). The polypeptide is Demethylmenaquinone methyltransferase (Bacillus pumilus (strain SAFR-032)).